The following is an 89-amino-acid chain: MIVRTLLIAAALLGGTAQAAESTDLCGANLQKLDDILAVRGKTSVTGARVTEVKELQAKARQDQASGDTKGCITATTQALQILQNAGKK.

The first 19 residues, 1 to 19, serve as a signal peptide directing secretion; that stretch reads MIVRTLLIAAALLGGTAQA.

It is found in the secreted. This is an uncharacterized protein from Pseudomonas aeruginosa (strain UCBPP-PA14).